The primary structure comprises 559 residues: MKKHRRKVSEPLPELSEKAKEQLAEAELRKLRQQFRKMVDSRKSSNFRNQRMIASQYKEIENLKAEQAETTLLLSLVKSPKNLDLNQKNFTELRFLLQTKGDYEALISSMKVLLGELDDKIVQMERKITNQRQIFLKTQEANNPRKLQKQIHILETRLNLVTVHFDTMLTSNAQLRKDIEDLLFEKAAYDHVYQQLQRRLQTQKKTMNVAIEQSTQAYEQRVEAMARMAAMKDRQQKDISQYNLEIRELERLYDHENKLKSFLLVKLNDRTEFEDQAKKQEAVKIKKHGKKRKGESFESYEVAHLRLLKLAENGDLNQLTEDFLAKEEKNFARFTYVTELNNDMETMHKRTQRIQDDIINLRSQQQSSHEGTRNILKQMEEKLRKTTEDTDIYENRYREMSKTLEYLKNSVEKLFKKINCNATEILGKLGETGKITDSNLQQYFAIIEKKTNDLLLLESFRRLQEAEGPDVDVPQPFVNPFWGGSALLKPPEPLRVVPPVFGADSFSDKVEEVPHRALSWVQWNTLWTTVASGSWSWRTTFRRNEEKNHRRHCWRRGTR.

3 coiled-coil regions span residues 14–70 (ELSE…QAET), 185–261 (EKAA…KLKS), and 364–414 (QQQS…VEKL).

Functionally, plays a role in spermiogenesis. Involved in the elongation of flagella and the formation of sperm heads. The sequence is that of Coiled-coil domain-containing protein 63 from Rattus norvegicus (Rat).